A 413-amino-acid chain; its full sequence is UPF0754 membrane protein PCC7424_0748 (413 aa).

2 helical membrane passes run 3–23 and 391–411; these read IALE…GAII and IVNL…VILL.

It belongs to the UPF0754 family.

Its subcellular location is the cell inner membrane. This chain is UPF0754 membrane protein PCC7424_0748, found in Gloeothece citriformis (strain PCC 7424) (Cyanothece sp. (strain PCC 7424)).